The following is a 329-amino-acid chain: Probable acyltransferase FabY (329 aa).

Residues 18–162 (YHLRVPQTEE…RHFLMIKPVA (145 aa)) form the N-acetyltransferase domain.

This sequence belongs to the acetyltransferase family. FabY subfamily.

It participates in lipid metabolism; fatty acid biosynthesis. In terms of biological role, supports initiation of fatty acid biosynthesis in the absence of FabH. The protein is Probable acyltransferase FabY of Escherichia coli O157:H7.